Here is a 384-residue protein sequence, read N- to C-terminus: 8-amino-7-oxononanoate synthase (384 aa).

Arginine 21 serves as a coordination point for substrate. 108-109 (GF) lines the pyridoxal 5'-phosphate pocket. A substrate-binding site is contributed by histidine 133. 3 residues coordinate pyridoxal 5'-phosphate: serine 179, histidine 207, and threonine 233. Position 236 is an N6-(pyridoxal phosphate)lysine (lysine 236). Threonine 352 serves as a coordination point for substrate.

It belongs to the class-II pyridoxal-phosphate-dependent aminotransferase family. BioF subfamily. Homodimer. Pyridoxal 5'-phosphate is required as a cofactor.

The catalysed reaction is 6-carboxyhexanoyl-[ACP] + L-alanine + H(+) = (8S)-8-amino-7-oxononanoate + holo-[ACP] + CO2. Its pathway is cofactor biosynthesis; biotin biosynthesis. Its function is as follows. Catalyzes the decarboxylative condensation of pimeloyl-[acyl-carrier protein] and L-alanine to produce 8-amino-7-oxononanoate (AON), [acyl-carrier protein], and carbon dioxide. The chain is 8-amino-7-oxononanoate synthase from Escherichia coli O7:K1 (strain IAI39 / ExPEC).